Consider the following 806-residue polypeptide: MASGADSKGDDLSTAILKQKNRPNRLIVDEAINEDNSVVSLSQPKMDELQLFRGDTVLLKGKKRREAVCIVLSDDTCSDEKIRMNRVVRNNLRVHLGDVISIQPCPDVKYGKRIHVLPIDDTVEGITGNLFEVYLKPYFLEAYRPIRKGDIFLVRGGMRAVEFKVVETDPSPYCIVAPDTVIHCEGEPIKREDEEESLNEVGYDDIGGCRKQLAQIKEMVELPLRHPALFKAIGVKPPRGILLYGPPGTGKTLIARAVANETGAFFFLINGPEIMSKLAGESESNLRKAFEEAEKNAPAIIFIDELDAIAPKREKTHGEVERRIVSQLLTLMDGLKQRAHVIVMAATNRPNSIDPALRRFGRFDREVDIGIPDATGRLEILQIHTKNMKLADDVDLEQVANETHGHVGADLAALCSEAALQAIRKKMDLIDLEDETIDAEVMNSLAVTMDDFRWALSQSNPSALRETVVEVPQVTWEDIGGLEDVKRELQDLVQYPVEHPDKFLKFGMTPSKGVLFYGPPGCGKTLLAKAIANECQANFISIKGPELLTMWFGESEANVREIFDKARQAAPCVLFFDELDSIAKARGGNIGDGGGAADRVINQILTEMDGMSTKKNVFIIGATNRPDIIDPAILRPGRLDQLIYIPLPDEKSRVAILKANLRKSPVAKDVDLEFLAKMTNGFSGADLTEICQRACKLAIRESIESEIRRERERQTNPSAMEVEEDDPVPEIRRDHFEEAMRFARRSVSDNDIRKYEMFAQTLQQSRGFGSFRFPSGNQGGAGPSQGSGGGTGGSVYTEDNDDDLYG.

A2 carries the post-translational modification N-acetylalanine. S3 and S7 each carry phosphoserine. A Glycyl lysine isopeptide (Lys-Gly) (interchain with G-Cter in SUMO2) cross-link involves residue K8. S13 is subject to Phosphoserine. K18 participates in a covalent cross-link: Glycyl lysine isopeptide (Lys-Gly) (interchain with G-Cter in SUMO2). Phosphoserine is present on S37. 247 to 253 (PGTGKTL) provides a ligand contact to ATP. Position 315 is an N6,N6,N6-trimethyllysine; by VCPKMT (K315). Residues N348 and H384 each contribute to the ATP site. T436 bears the Phosphothreonine mark. At S462 the chain carries Phosphoserine. K502 and K505 each carry N6-acetyllysine. An ATP-binding site is contributed by 521–526 (GCGKTL). K668 bears the N6-acetyllysine; alternate mark. At K668 the chain carries N6-succinyllysine; alternate. Position 702 is a phosphoserine (S702). Positions 708–727 (RRERERQTNPSAMEVEEDDP) are disordered. N6-acetyllysine is present on K754. A disordered region spans residues 768–806 (FGSFRFPSGNQGGAGPSQGSGGGTGGSVYTEDNDDDLYG). S770, S775, and S787 each carry phosphoserine. Positions 777–793 (NQGGAGPSQGSGGGTGG) are enriched in gly residues. The segment at 797–806 (TEDNDDDLYG) is interaction with UBXN6. Y805 carries the phosphotyrosine modification.

This sequence belongs to the AAA ATPase family. Homohexamer. Forms a ring-shaped particle of 12.5 nm diameter, that displays 6-fold radial symmetry. Part of a ternary complex containing STX5A, NSFL1C and VCP. NSFL1C forms a homotrimer that binds to one end of a VCP homohexamer. The complex binds to membranes enriched in phosphatidylethanolamine-containing lipids and promotes Golgi membrane fusion. Binds to a heterodimer of NPLOC4 and UFD1, binding to this heterodimer inhibits Golgi-membrane fusion. Interaction with VCIP135 leads to dissociation of the complex via ATP hydrolysis by VCP. Part of a ternary complex containing NPLOC4, UFD1 and VCP. Interacts with NSFL1C-like protein p37; the complex has membrane fusion activity and is required for Golgi and endoplasmic reticulum biogenesis. Interacts with SELENOS and SYVN1, as well as with DERL1 (via SHP-box motif), DERL2 and DERL3; which probably transfer misfolded proteins from the ER to VCP. Interacts with SVIP and DERL1. Component of a complex required to couple retrotranslocation, ubiquitination and deglycosylation composed of NGLY1, SAKS1, AMFR, VCP and RAD23B. Part of a complex composed of STUB1/CHIP, VCP/p97, CHRNA3, and UBXN2A that modulates the ubiquitination and endoplasmic reticulum-associated degradation (ERAD) of CHRNA3. Within the complex UBXN2A acts as a scaffold protein required for the interaction of CHRNA3 with VCP/p97, this interaction also inhibits CHRNA3 ubiquitination by STUB1/CHIP and subsequently ERAD. Interacts with UBXN2A (via UBX domain); the interaction is required for the interaction of CHRNA3 in the STUB1-VCP-UBXN2A complex. Directly interacts with UBXN4 and RNF19A. Interacts with CASR. Interacts with UBE4B and YOD1. Interacts with clathrin. Interacts with RNF103. Interacts with TRIM13 and TRIM21. Component of a VCP/p97-AMFR/gp78 complex that participates in the final step of the endoplasmic reticulum-associated degradation (ERAD) of HMGCR. Interacts directly with AMFR/gp78 (via its VIM). Interacts with RHBDD1 (via C-terminal domain). Interacts with SPRTN; leading to recruitment to stalled replication forks. Interacts with WASHC5. Interacts with UBOX5. Interacts (via N-terminus) with UBXN7, UBXN8, and probably several other UBX domain-containing proteins (via UBX domains); the interactions are mutually exclusive with VIM-dependent interactions such as those with AMFR and SELENOS. Forms a complex with UBQLN1 and UBXN4. Interacts (via the PIM motif) with RNF31 (via the PUB domain). Interacts with RIGI and RNF125; interaction takes place when RIGI is ubiquitinated via 'Lys-63'-linked ubiquitin on its CARD domains, leading to recruit RNF125 and promote ubiquitination and degradation of RIGI. Interacts with BAG6. Interacts with UBXN10. Interacts with UBXN6; the interaction with UBXN6 is direct and competitive with UFD1. Forms a ternary complex with CAV1 and UBXN6. Interacts with PLAA, UBXN6 and YOD1; may form a complex involved in macroautophagy. Interacts with ANKZF1. Interacts with ubiquitin-binding protein FAF1. Interacts with ZFAND2B (via VIM motif); the interaction is direct. Interacts with ZFAND1 (via its ubiquitin-like region); this interaction occurs in an arsenite-dependent manner. Interacts with CCDC47. Interacts with LMBR1L and UBAC2. Interacts with ATXN3. Interacts with TEX264; bridging VCP to covalent DNA-protein cross-links (DPCs). It depends on Mg(2+) as a cofactor. Post-translationally, ISGylated. Methylation at Lys-315 catalyzed by VCPKMT is increased in the presence of ASPSCR1. Lys-315 methylation may decrease ATPase activity. In terms of processing, phosphorylated by tyrosine kinases in response to T-cell antigen receptor activation. Phosphorylated in mitotic cells.

Its subcellular location is the cytoplasm. It is found in the cytosol. It localises to the endoplasmic reticulum. The protein localises to the nucleus. The protein resides in the stress granule. It carries out the reaction ATP + H2O = ADP + phosphate + H(+). In terms of biological role, necessary for the fragmentation of Golgi stacks during mitosis and for their reassembly after mitosis. Involved in the formation of the transitional endoplasmic reticulum (tER). The transfer of membranes from the endoplasmic reticulum to the Golgi apparatus occurs via 50-70 nm transition vesicles which derive from part-rough, part-smooth transitional elements of the endoplasmic reticulum (tER). Vesicle budding from the tER is an ATP-dependent process. The ternary complex containing UFD1, VCP and NPLOC4 binds ubiquitinated proteins and is necessary for the export of misfolded proteins from the ER to the cytoplasm, where they are degraded by the proteasome. The NPLOC4-UFD1-VCP complex regulates spindle disassembly at the end of mitosis and is necessary for the formation of a closed nuclear envelope. Regulates E3 ubiquitin-protein ligase activity of RNF19A. Component of the VCP/p97-AMFR/gp78 complex that participates in the final step of the sterol-mediated ubiquitination and endoplasmic reticulum-associated degradation (ERAD) of HMGCR. Mediates the endoplasmic reticulum-associated degradation of CHRNA3 in cortical neurons as part of the STUB1-VCP-UBXN2A complex. Involved in endoplasmic reticulum stress-induced pre-emptive quality control, a mechanism that selectively attenuates the translocation of newly synthesized proteins into the endoplasmic reticulum and reroutes them to the cytosol for proteasomal degradation. Involved in clearance process by mediating G3BP1 extraction from stress granules. Also involved in DNA damage response: recruited to double-strand breaks (DSBs) sites in a RNF8- and RNF168-dependent manner and promotes the recruitment of TP53BP1 at DNA damage sites. Recruited to stalled replication forks by SPRTN: may act by mediating extraction of DNA polymerase eta (POLH) to prevent excessive translesion DNA synthesis and limit the incidence of mutations induced by DNA damage. Together with SPRTN metalloprotease, involved in the repair of covalent DNA-protein cross-links (DPCs) during DNA synthesis. Involved in interstrand cross-link repair in response to replication stress by mediating unloading of the ubiquitinated CMG helicase complex. Mediates extraction of PARP1 trapped to chromatin: recognizes and binds ubiquitinated PARP1 and promotes its removal. Required for cytoplasmic retrotranslocation of stressed/damaged mitochondrial outer-membrane proteins and their subsequent proteasomal degradation. Essential for the maturation of ubiquitin-containing autophagosomes and the clearance of ubiquitinated protein by autophagy. Acts as a negative regulator of type I interferon production by interacting with RIGI: interaction takes place when RIGI is ubiquitinated via 'Lys-63'-linked ubiquitin on its CARD domains, leading to recruit RNF125 and promote ubiquitination and degradation of RIGI. May play a role in the ubiquitin-dependent sorting of membrane proteins to lysosomes where they undergo degradation. May more particularly play a role in caveolins sorting in cells. By controlling the steady-state expression of the IGF1R receptor, indirectly regulates the insulin-like growth factor receptor signaling pathway. The sequence is that of Transitional endoplasmic reticulum ATPase (VCP) from Sus scrofa (Pig).